Consider the following 398-residue polypeptide: FK506-binding protein 4 (398 aa).

Disordered stretches follow at residues 66 to 120 (EVDE…DEYE), 164 to 232 (VKHP…QLAK), and 245 to 288 (DLIA…KKNK). Over residues 170-228 (EPLEDLYSDEDSEEYSDDELDQEIEEDDELDHDEASSEESDEDQEFYDAISEGDEDIDE) the composition is skewed to acidic residues. Residues 264 to 287 (PETKKSKKTKDEKNTKATENEKKN) show a composition bias toward basic and acidic residues. Positions 312 to 398 (GSKVGMRYIG…TFDVKLVSLK (87 aa)) constitute a PPIase FKBP-type domain.

It belongs to the FKBP-type PPIase family. FKBP3/4 subfamily. Binds to histones H3 and H4.

The protein resides in the nucleus. It carries out the reaction [protein]-peptidylproline (omega=180) = [protein]-peptidylproline (omega=0). With respect to regulation, inhibited by both FK506 and rapamycin. PPIase that acts as a histone chaperone. Histone proline isomerase that increases the rate of cis-trans isomerization at prolines on the histone H3 N-terminal tail. Proline isomerization influences H3 methylation thereby regulating gene expression. The protein is FK506-binding protein 4 (FPR4) of Candida glabrata (strain ATCC 2001 / BCRC 20586 / JCM 3761 / NBRC 0622 / NRRL Y-65 / CBS 138) (Yeast).